A 244-amino-acid polypeptide reads, in one-letter code: HTH-type transcriptional regulator Cmr (244 aa).

An a nucleoside 3',5'-cyclic phosphate-binding site is contributed by 41 to 160 (GSAPLHRDDV…RRWLSSVAQR (120 aa)). An HTH crp-type domain is found at 174–237 (RPLPAQVAQL…YAVIEITDQH (64 aa)). The segment at residues 197–216 (QRTLAAMLGAQRPSINKILK) is a DNA-binding region (H-T-H motif).

Its function is as follows. Positively regulates the expression of at least groEL2. The protein is HTH-type transcriptional regulator Cmr (cmr) of Mycobacterium tuberculosis (strain CDC 1551 / Oshkosh).